The primary structure comprises 199 residues: Probable molybdenum cofactor guanylyltransferase (199 aa).

Residues 6-8 (LAG), Lys18, Asp65, and Asp97 contribute to the GTP site. Asp97 serves as a coordination point for Mg(2+).

Belongs to the MobA family. Mg(2+) is required as a cofactor.

It is found in the cytoplasm. It carries out the reaction Mo-molybdopterin + GTP + H(+) = Mo-molybdopterin guanine dinucleotide + diphosphate. Transfers a GMP moiety from GTP to Mo-molybdopterin (Mo-MPT) cofactor (Moco or molybdenum cofactor) to form Mo-molybdopterin guanine dinucleotide (Mo-MGD) cofactor. The chain is Probable molybdenum cofactor guanylyltransferase from Staphylococcus aureus (strain COL).